A 393-amino-acid polypeptide reads, in one-letter code: Myb-related transcription factor, partner of profilin (393 aa).

Positions 1–11 (MASATAAAAPG) are enriched in low complexity. A disordered region spans residues 1–21 (MASATAAAAPGEAEETTRLRK). The Myb-like domain maps to 16 to 88 (TTRLRKPRFS…EVQKRWNDFK (73 aa)). The short motif at 87 to 90 (FKRR) is the Nuclear localization signal element. 3 disordered regions span residues 125 to 254 (GPGV…EQSL), 290 to 323 (PLLP…APKV), and 348 to 393 (IISP…WKSP). Low complexity predominate over residues 142-157 (AAASSQPQASTASTQR). A compositionally biased stretch (basic and acidic residues) spans 160–171 (LSEDRRQDRRAD). A compositionally biased stretch (polar residues) spans 173–184 (PAQSKGGSSSPE). 4 stretches are compositionally biased toward pro residues: residues 219–229 (PPLPAPPPPPT), 238–247 (SPSPTPPRPT), 296–320 (PADP…PPSA), and 359–368 (KPLPPAPPLP). Positions 375–393 (HKRRKGFPTRKRRGRWKSP) are enriched in basic residues. 2 consecutive short sequence motifs (nuclear localization signal) follow at residues 376–379 (KRRK) and 384–387 (RKRR).

In terms of assembly, interacts with PFN1. Homodimer and heterodimer with PFN1. As to expression, ubiquitous. Highly expressed in brain, liver and testis. Moderate expression in heart, lung and skeletal muscle. Low expression in spleen and kidney.

Its subcellular location is the nucleus. Transcriptional repressor; DNA-binding protein that specifically recognizes the core sequence 5'-YAAC[GT]G-3'. Dimerization with PFN1 reduces its DNA-binding capacity. The sequence is that of Myb-related transcription factor, partner of profilin (Mypop) from Mus musculus (Mouse).